The chain runs to 108 residues: Zinc metalloproteinase/disintegrin (108 aa).

Residues 1–19 (NEYQTYLTDRNPQCILNEP) form the Peptidase M12B domain. Positions 20–35 (LRTDTVSTPVSGNELL) are excised as a propeptide. A Disintegrin domain is found at 27–108 (TPVSGNELLE…ADCPRNGFYG (82 aa)). 6 disulfide bridges follow: Cys-41/Cys-56, Cys-43/Cys-51, Cys-50/Cys-73, Cys-64/Cys-70, Cys-69/Cys-94, and Cys-82/Cys-101. Positions 86–88 (KGD) match the Cell attachment site; atypical (KGD) motif.

This sequence belongs to the venom metalloproteinase (M12B) family. P-II subfamily. P-IIa sub-subfamily. As to quaternary structure, monomeric (disintegrin). Zn(2+) is required as a cofactor. Expressed by the venom gland.

Its subcellular location is the secreted. Functionally, impairs hemostasis in the envenomed animal. Its function is as follows. Inhibits platelet aggregation induced by ADP, thrombin, platelet-activating factor and collagen. Acts by inhibiting fibrinogen interaction with platelet receptors GPIIb/GPIIIa (ITGA2B/ITGB3). The chain is Zinc metalloproteinase/disintegrin from Gloydius brevicauda (Korean slamosa snake).